The following is a 519-amino-acid chain: Putative thymidine phosphorylase (519 aa).

It belongs to the thymidine/pyrimidine-nucleoside phosphorylase family. Type 2 subfamily.

The catalysed reaction is thymidine + phosphate = 2-deoxy-alpha-D-ribose 1-phosphate + thymine. The sequence is that of Putative thymidine phosphorylase from Maricaulis maris (strain MCS10) (Caulobacter maris).